Consider the following 330-residue polypeptide: Putative 1-aminocyclopropane-1-carboxylate deaminase (330 aa).

The residue at position 54 (Lys54) is an N6-(pyridoxal phosphate)lysine.

It belongs to the ACC deaminase/D-cysteine desulfhydrase family. It depends on pyridoxal 5'-phosphate as a cofactor.

The catalysed reaction is 1-aminocyclopropane-1-carboxylate + H2O = 2-oxobutanoate + NH4(+). This Pyrococcus abyssi (strain GE5 / Orsay) protein is Putative 1-aminocyclopropane-1-carboxylate deaminase.